Consider the following 186-residue polypeptide: MAAFTCTSRPPISLRSETRIVSSSPSASSLSSRRMFAVLPESSGLRIRLSLSPASLTSIHQPRVSRLRRAVVCEAQETTTDIQVVNDSTWDSLVLKATGPVVVDFWAPWCGPCKMIDPLVNDLAQHYTGKIKFYKLNTDESPNTPGQYGVRSIPTIMIFVGGEKKDTIIGAVPKTTLTSSLDKFLP.

A chloroplast-targeting transit peptide spans 1–72; sequence MAAFTCTSRP…RVSRLRRAVV (72 aa). The Thioredoxin domain maps to 73-186; it reads CEAQETTTDI…LTSSLDKFLP (114 aa). Residues C110 and C113 each act as nucleophile in the active site. Residues C110 and C113 are joined by a disulfide bond.

It belongs to the thioredoxin family. Plant M-type subfamily. In terms of assembly, interacts with G6PD1 and G6PD4. Interacts with PGL3.

Its subcellular location is the plastid. The protein resides in the chloroplast stroma. Functionally, thiol-disulfide oxidoreductase that may participate in various redox reactions. May activate NADP-malate dehydrogenase. The sequence is that of Thioredoxin M2, chloroplastic from Arabidopsis thaliana (Mouse-ear cress).